The following is a 172-amino-acid chain: Shikimate kinase (172 aa).

Residue 14-19 (GAGKTT) coordinates ATP. Thr18 lines the Mg(2+) pocket. Substrate-binding residues include Asp36, Arg60, and Gly82. Arg119 provides a ligand contact to ATP. Arg137 provides a ligand contact to substrate.

The protein belongs to the shikimate kinase family. As to quaternary structure, monomer. The cofactor is Mg(2+).

Its subcellular location is the cytoplasm. It carries out the reaction shikimate + ATP = 3-phosphoshikimate + ADP + H(+). The protein operates within metabolic intermediate biosynthesis; chorismate biosynthesis; chorismate from D-erythrose 4-phosphate and phosphoenolpyruvate: step 5/7. Catalyzes the specific phosphorylation of the 3-hydroxyl group of shikimic acid using ATP as a cosubstrate. In Thermobifida fusca (strain YX), this protein is Shikimate kinase.